A 161-amino-acid polypeptide reads, in one-letter code: Ribonuclease H (161 aa).

The 142-residue stretch at 3 to 144 folds into the RNase H type-1 domain; the sequence is VLKQLSIFTD…CDTLARVAAE (142 aa). 4 residues coordinate Mg(2+): D12, E50, D72, and D136.

This sequence belongs to the RNase H family. As to quaternary structure, monomer. Mg(2+) is required as a cofactor.

The protein resides in the cytoplasm. The enzyme catalyses Endonucleolytic cleavage to 5'-phosphomonoester.. Its function is as follows. Endonuclease that specifically degrades the RNA of RNA-DNA hybrids. The chain is Ribonuclease H from Shewanella woodyi (strain ATCC 51908 / MS32).